A 279-amino-acid polypeptide reads, in one-letter code: Urease accessory protein UreD (279 aa).

Belongs to the UreD family. In terms of assembly, ureD, UreF and UreG form a complex that acts as a GTP-hydrolysis-dependent molecular chaperone, activating the urease apoprotein by helping to assemble the nickel containing metallocenter of UreC. The UreE protein probably delivers the nickel.

The protein resides in the cytoplasm. In terms of biological role, required for maturation of urease via the functional incorporation of the urease nickel metallocenter. This Pseudomonas fluorescens (strain ATCC BAA-477 / NRRL B-23932 / Pf-5) protein is Urease accessory protein UreD.